A 284-amino-acid polypeptide reads, in one-letter code: Tropomyosin (284 aa).

Residues 1-284 (MDAIKKKMVA…DATFAELAGY (284 aa)) are a coiled coil. The span at 32 to 41 (TEEAKAKIED) shows a compositional bias: basic and acidic residues. A disordered region spans residues 32-60 (TEEAKAKIEDDYNSLQKKSIQTENDLDNT). Residues 44 to 60 (NSLQKKSIQTENDLDNT) show a composition bias toward polar residues.

It belongs to the tropomyosin family. In terms of assembly, homodimer.

In terms of biological role, tropomyosin, in association with the troponin complex, plays a central role in the calcium dependent regulation of muscle contraction. This is Tropomyosin from Mytilus edulis (Blue mussel).